A 925-amino-acid chain; its full sequence is Serine/threonine-protein kinase SIK2 (925 aa).

Residues 20–271 (YDIEGTLGKG…IAQIKEHKWM (252 aa)) form the Protein kinase domain. Thr-25 carries the post-translational modification Phosphothreonine. Residues 26–34 (LGKGNFAVV) and Lys-49 each bind ATP. Lys-53 is modified (N6-acetyllysine; by EP300). Residue Asp-142 is the Proton acceptor of the active site. Thr-175 is modified (phosphothreonine). In terms of domain architecture, UBA spans 295–335 (EFNEQVLRLMHSLGIDQQKTIESLQNKSYNHFAAIYFLLVE). Ser-534 is subject to Phosphoserine. A disordered region spans residues 564 to 586 (ALSSQKREVHNRSPVSFREGRRA). Position 587 is a phosphoserine (Ser-587). 3 disordered regions span residues 630–674 (PNLA…PRQS), 742–776 (SSYPQPSQQLPLPRQETPPPSQQAPPFSLTQPLSP), and 800–895 (QPLP…SSYD). 2 stretches are compositionally biased toward low complexity: residues 648 to 659 (QEEVSQQQESVS) and 742 to 756 (SSYPQPSQQLPLPRQ). Residues 765–774 (APPFSLTQPL) show a composition bias toward polar residues. The segment covering 808 to 820 (PRAAPLPTQLQQQ) has biased composition (low complexity). Positions 821–833 (QPPPPPPPPPPRQ) are enriched in pro residues.

This sequence belongs to the protein kinase superfamily. CAMK Ser/Thr protein kinase family. SNF1 subfamily. Interacts with and phosphorylates TORC2/CRTC2. The cofactor is Mg(2+). In terms of processing, phosphorylated at Thr-175 by STK11/LKB1 in complex with STE20-related adapter-alpha (STRADA) pseudo kinase and CAB39. Phosphorylated at Thr-484 in response to insulin in adipocytes. Acetylation at Lys-53 inhibits kinase activity. Deacetylated by HDAC6.

The protein localises to the cytoplasm. It localises to the endoplasmic reticulum membrane. The enzyme catalyses L-seryl-[protein] + ATP = O-phospho-L-seryl-[protein] + ADP + H(+). The catalysed reaction is L-threonyl-[protein] + ATP = O-phospho-L-threonyl-[protein] + ADP + H(+). Activated by phosphorylation on Thr-175. Its function is as follows. Serine/threonine-protein kinase that plays a role in many biological processes such as fatty acid oxidation, autophagy, immune response or glucose metabolism. Phosphorylates 'Ser-794' of IRS1 in insulin-stimulated adipocytes, potentially modulating the efficiency of insulin signal transduction. Inhibits CREB activity by phosphorylating and repressing TORCs, the CREB-specific coactivators. Phosphorylates EP300 and thus inhibits its histone acetyltransferase activity. In turn, regulates the DNA-binding ability of several transcription factors such as PPARA or MLXIPL. Also plays a role in thymic T-cell development. The chain is Serine/threonine-protein kinase SIK2 (SIK2) from Pongo abelii (Sumatran orangutan).